Reading from the N-terminus, the 328-residue chain is Nucleotide-binding protein Blon_1085/BLIJ_1109 (328 aa).

The tract at residues 1 to 33 is disordered; that stretch reads MSQQTTIRDTGEAAATNAPANSATSTSTPDNQP. Low complexity predominate over residues 13-29; it reads AAATNAPANSATSTSTP. Residue 46-53 coordinates ATP; sequence GMSGAGRS. 101–104 serves as a coordination point for GTP; sequence DVRS.

It belongs to the RapZ-like family.

Functionally, displays ATPase and GTPase activities. The polypeptide is Nucleotide-binding protein Blon_1085/BLIJ_1109 (Bifidobacterium longum subsp. infantis (strain ATCC 15697 / DSM 20088 / JCM 1222 / NCTC 11817 / S12)).